A 205-amino-acid polypeptide reads, in one-letter code: High frequency lysogenization protein HflD homolog (205 aa).

It belongs to the HflD family.

The protein resides in the cytoplasm. It localises to the cell inner membrane. This is High frequency lysogenization protein HflD homolog from Shewanella oneidensis (strain ATCC 700550 / JCM 31522 / CIP 106686 / LMG 19005 / NCIMB 14063 / MR-1).